Reading from the N-terminus, the 437-residue chain is uncharacterized protein (437 aa).

Residues Ser290 and Ser293 each carry the phosphoserine modification. Residue Thr296 is modified to Phosphothreonine. Phosphoserine is present on residues Ser418 and Ser428.

This is an uncharacterized protein from Schizosaccharomyces pombe (strain 972 / ATCC 24843) (Fission yeast).